The chain runs to 660 residues: MMPSSQRPSPRGSRQSPSPDQRGRIAFAILATLVVAVLLLTLFSHAPSGQPLGYSTFIHDVQAKQVRTAVLNNTTGQITGSLTNGTAYSVTGPLPYTSSELSTLSKAHVQVSYITPGPGIASTIIEYVIFFGIFIGIWVYLTRRTQGSVNGIMSVGRSRAKTYTTERPKTTFDDVAGYQGVKGEVKEVVDFLRDPSRFSQLGARIPKGILLVGPPGTGKTLLARAVAGEAGVPFMSVSGSDFMEMFVGVGAARVRDLFQTARRQSPSIIFIDEIDSIGRKRGTGLGGGHDEREQTLNQMLSEMDGFDPAEGIVVMAATNRPDILDPALLRPGRFDRQIVVPLPDLPERLAILQVHTRGKRLAPDVDLEVMAKGTPGMSGADLANLVNEAALNAVRRGATDIAMADFDSARDRIIMGQRREATILSDEEKERVAFHEGGHAVLAYVLDYSDPVHKVTILPTGMALGVTQQLPERDRHLYPREYIEDTLVVRMGGRVAELLVYGDLSTGAANDLQGNTELARRMVREWGMSERLGPMAWGSQNVVFLGEDLLHSAEYSDRTARLVDEEVERILREQEERATELLRQHLPGLIAVAHALLERETISGEEVGRLVDEAAGHPIHPDGKRVLPIAKLPEYAELEQFTVTNGNNHAASHDDTDPVS.

The interval 1–20 (MMPSSQRPSPRGSRQSPSPD) is disordered. Over 1–24 (MMPSSQRPSPRGSRQSPSPDQRGR) the chain is Cytoplasmic. Residues 25–45 (IAFAILATLVVAVLLLTLFSH) form a helical membrane-spanning segment. The Extracellular portion of the chain corresponds to 46–118 (APSGQPLGYS…VQVSYITPGP (73 aa)). A helical transmembrane segment spans residues 119 to 139 (GIASTIIEYVIFFGIFIGIWV). Residues 140 to 660 (YLTRRTQGSV…ASHDDTDPVS (521 aa)) lie on the Cytoplasmic side of the membrane. Position 213-220 (213-220 (GPPGTGKT)) interacts with ATP. H435 is a binding site for Zn(2+). E436 is a catalytic residue. Zn(2+) is bound by residues H439 and D511.

This sequence in the central section; belongs to the AAA ATPase family. In the C-terminal section; belongs to the peptidase M41 family. In terms of assembly, homohexamer. Zn(2+) serves as cofactor.

It is found in the cell membrane. Functionally, acts as a processive, ATP-dependent zinc metallopeptidase for both cytoplasmic and membrane proteins. Plays a role in the quality control of integral membrane proteins. This Acidimicrobium ferrooxidans (strain DSM 10331 / JCM 15462 / NBRC 103882 / ICP) protein is ATP-dependent zinc metalloprotease FtsH.